A 179-amino-acid chain; its full sequence is MPKPSRGPRMCSGPDHERLVLANMSASLFLNKKLRTTEARAKRLRPFAEKLVTLSKRGGLHSRRRALSILRNKAALHELFTNIAPLVEDRNGGYTRITKVGFRSGDGAPMALIELILEPVSARTRGTDTLPDTVTDTGPDSAPDPVPGSEPGSAAGDLPDADTAPADPGESSSNQRVIR.

Residues 123 to 179 (RTRGTDTLPDTVTDTGPDSAPDPVPGSEPGSAAGDLPDADTAPADPGESSSNQRVIR) are disordered. Residues 154-168 (AAGDLPDADTAPADP) are compositionally biased toward low complexity. Polar residues predominate over residues 170-179 (ESSSNQRVIR).

The protein belongs to the bacterial ribosomal protein bL17 family. As to quaternary structure, part of the 50S ribosomal subunit. Contacts protein L32.

This Tropheryma whipplei (strain Twist) (Whipple's bacillus) protein is Large ribosomal subunit protein bL17.